The chain runs to 410 residues: Multifunctional CCA protein (410 aa).

ATP is bound by residues G8 and R11. G8 and R11 together coordinate CTP. Residues E21 and D23 each contribute to the Mg(2+) site. Residues R91, R137, and R140 each coordinate ATP. CTP contacts are provided by R91, R137, and R140. Residues 228–329 (TGIHSLMTLR…VKLLEQVDAF (102 aa)) form the HD domain.

It belongs to the tRNA nucleotidyltransferase/poly(A) polymerase family. Bacterial CCA-adding enzyme type 1 subfamily. In terms of assembly, monomer. Can also form homodimers and oligomers. It depends on Mg(2+) as a cofactor. Ni(2+) is required as a cofactor.

The catalysed reaction is a tRNA precursor + 2 CTP + ATP = a tRNA with a 3' CCA end + 3 diphosphate. It catalyses the reaction a tRNA with a 3' CCA end + 2 CTP + ATP = a tRNA with a 3' CCACCA end + 3 diphosphate. Catalyzes the addition and repair of the essential 3'-terminal CCA sequence in tRNAs without using a nucleic acid template. Adds these three nucleotides in the order of C, C, and A to the tRNA nucleotide-73, using CTP and ATP as substrates and producing inorganic pyrophosphate. tRNA 3'-terminal CCA addition is required both for tRNA processing and repair. Also involved in tRNA surveillance by mediating tandem CCA addition to generate a CCACCA at the 3' terminus of unstable tRNAs. While stable tRNAs receive only 3'-terminal CCA, unstable tRNAs are marked with CCACCA and rapidly degraded. This chain is Multifunctional CCA protein, found in Legionella pneumophila (strain Lens).